We begin with the raw amino-acid sequence, 300 residues long: MTAFGVEPYGQPKYLEIAGKRMAYIDEGKGDAIVFQHGNPTSSYLWRNIMPHLEGLGRLVACDLIGMGASDKLSPSGPDRYSYGEQRDFLFALWDALDLGDHVVLVLHDWGSALGFDWANQHRDRVQGIAFMEAIVTPMTWADWPPAVRGVFQGFRSPQGEPMALEHNIFVERVLPGAILRQLSDEEMNHYRRPFVNGGEDRRPTLSWPRNLPIDGEPAEVVALVNEYRSWLEETDMPKLFINAEPGAIITGRIRDYVRSWPNQTEITVPGVHFVQEDSPEEIGAAIAQFVRQLRSAAGV.

Residues 32-155 (AIVFQHGNPT…PAVRGVFQGF (124 aa)) form the AB hydrolase-1 domain. The Nucleophile role is filled by aspartate 109. The active-site Proton donor is glutamate 133. Histidine 273 acts as the Proton acceptor in catalysis.

It belongs to the haloalkane dehalogenase family. Type 2 subfamily. As to quaternary structure, monomer.

The catalysed reaction is 1-haloalkane + H2O = a halide anion + a primary alcohol + H(+). Functionally, catalyzes hydrolytic cleavage of carbon-halogen bonds in halogenated aliphatic compounds, leading to the formation of the corresponding primary alcohols, halide ions and protons. In Mycobacterium bovis (strain BCG / Pasteur 1173P2), this protein is Haloalkane dehalogenase.